Here is an 81-residue protein sequence, read N- to C-terminus: Photosystem I iron-sulfur center (81 aa).

4Fe-4S ferredoxin-type domains lie at 2 to 31 (SHTV…MVPW) and 39 to 68 (IASA…VRVY). Residues Cys-11, Cys-14, Cys-17, Cys-21, Cys-48, Cys-51, Cys-54, and Cys-58 each contribute to the [4Fe-4S] cluster site.

In terms of assembly, the eukaryotic PSI reaction center is composed of at least 11 subunits. It depends on [4Fe-4S] cluster as a cofactor.

The protein localises to the plastid. It localises to the chloroplast thylakoid membrane. The catalysed reaction is reduced [plastocyanin] + hnu + oxidized [2Fe-2S]-[ferredoxin] = oxidized [plastocyanin] + reduced [2Fe-2S]-[ferredoxin]. Its function is as follows. Apoprotein for the two 4Fe-4S centers FA and FB of photosystem I (PSI); essential for photochemical activity. FB is the terminal electron acceptor of PSI, donating electrons to ferredoxin. The C-terminus interacts with PsaA/B/D and helps assemble the protein into the PSI complex. Required for binding of PsaD and PsaE to PSI. PSI is a plastocyanin/cytochrome c6-ferredoxin oxidoreductase, converting photonic excitation into a charge separation, which transfers an electron from the donor P700 chlorophyll pair to the spectroscopically characterized acceptors A0, A1, FX, FA and FB in turn. This is Photosystem I iron-sulfur center from Chlorella vulgaris (Green alga).